Here is a 358-residue protein sequence, read N- to C-terminus: N-acylethanolamine-hydrolyzing acid amidase (358 aa).

Residues 1–26 (MQGTGHPVRPVLELLLLLLLLAGVGG) form the signal peptide. N-linked (GlcNAc...) asparagine glycans are attached at residues asparagine 39 and asparagine 108. The active-site Nucleophile is the cysteine 127. N-linked (GlcNAc...) asparagine glycans are attached at residues asparagine 310, asparagine 334, and asparagine 356.

The protein belongs to the acid ceramidase family. In terms of assembly, heterodimer of an alpha and a beta subunit, produced by autocatalytic cleavage. In terms of processing, N-glycosylated. Tunicamycin treatment causes a reduction in specific activity against N-palmitoylethanolamine. Autoproteolytic cleavage at pH 4.5 gives rise to the alpha and beta subunit. Cleavage gives rise to a conformation change that activates the enzyme. The same catalytic Cys residue mediates the autoproteolytic cleavage and subsequent hydrolysis of lipid substrates.

The protein resides in the lysosome. It is found in the membrane. The catalysed reaction is N-hexadecanoylethanolamine + H2O = ethanolamine + hexadecanoate. It catalyses the reaction an N-(long-chain fatty acyl)ethanolamine + H2O = a long-chain fatty acid + ethanolamine. It carries out the reaction N-dodecanoylethanolamine + H2O = dodecanoate + ethanolamine. The enzyme catalyses N-tetradecanoylethanolamine + H2O = tetradecanoate + ethanolamine. The catalysed reaction is an N-acylsphing-4-enine + H2O = sphing-4-enine + a fatty acid. It catalyses the reaction N-hexadecanoylsphing-4-enine + H2O = sphing-4-enine + hexadecanoate. It carries out the reaction N-dodecanoylsphing-4-enine + H2O = dodecanoate + sphing-4-enine. Its pathway is lipid metabolism; fatty acid metabolism. Degrades bioactive fatty acid amides to their corresponding acids, with the following preference: N-palmitoylethanolamine &gt; N-myristoylethanolamine &gt; N-stearoylethanolamine &gt; N-oleoylethanolamine &gt; N-linoleoylethanolamine &gt; N-arachidonoylethanolamine. This is N-acylethanolamine-hydrolyzing acid amidase from Oryctolagus cuniculus (Rabbit).